Consider the following 301-residue polypeptide: Probable alpha-L-glutamate ligase (301 aa).

An ATP-grasp domain is found at 104 to 287 (LQLLSRKGIG…VAGMIVEFIE (184 aa)). ATP is bound by residues Lys141, 178-179 (EF), Asp187, and 211-213 (RSN). Mg(2+) contacts are provided by Asp248, Glu260, and Asn262. Mn(2+) contacts are provided by Asp248, Glu260, and Asn262.

This sequence belongs to the RimK family. Requires Mg(2+) as cofactor. It depends on Mn(2+) as a cofactor.

The protein is Probable alpha-L-glutamate ligase of Teredinibacter turnerae (strain ATCC 39867 / T7901).